We begin with the raw amino-acid sequence, 278 residues long: ATP synthase subunit delta (278 aa).

This sequence belongs to the ATPase delta chain family. F-type ATPases have 2 components, F(1) - the catalytic core - and F(0) - the membrane proton channel. F(1) has five subunits: alpha(3), beta(3), gamma(1), delta(1), epsilon(1). F(0) has three main subunits: a(1), b(2) and c(10-14). The alpha and beta chains form an alternating ring which encloses part of the gamma chain. F(1) is attached to F(0) by a central stalk formed by the gamma and epsilon chains, while a peripheral stalk is formed by the delta and b chains.

Its subcellular location is the cell membrane. Functionally, f(1)F(0) ATP synthase produces ATP from ADP in the presence of a proton or sodium gradient. F-type ATPases consist of two structural domains, F(1) containing the extramembraneous catalytic core and F(0) containing the membrane proton channel, linked together by a central stalk and a peripheral stalk. During catalysis, ATP synthesis in the catalytic domain of F(1) is coupled via a rotary mechanism of the central stalk subunits to proton translocation. In terms of biological role, this protein is part of the stalk that links CF(0) to CF(1). It either transmits conformational changes from CF(0) to CF(1) or is implicated in proton conduction. The protein is ATP synthase subunit delta of Bifidobacterium longum subsp. infantis (strain ATCC 15697 / DSM 20088 / JCM 1222 / NCTC 11817 / S12).